The sequence spans 162 residues: Small ribosomal subunit protein uS13 (162 aa).

The interval 142–162 (RGQRTKSTGRRGSTVGVSRKK) is disordered.

It belongs to the universal ribosomal protein uS13 family. Part of the 30S ribosomal subunit. Forms a loose heterodimer with protein S19. Forms two bridges to the 50S subunit in the 70S ribosome.

Its function is as follows. Located at the top of the head of the 30S subunit, it contacts several helices of the 16S rRNA. In the 70S ribosome it contacts the 23S rRNA (bridge B1a) and protein L5 of the 50S subunit (bridge B1b), connecting the 2 subunits; these bridges are implicated in subunit movement. In Methanosarcina acetivorans (strain ATCC 35395 / DSM 2834 / JCM 12185 / C2A), this protein is Small ribosomal subunit protein uS13.